The primary structure comprises 376 residues: Branched-chain-amino-acid aminotransferase, cytosolic (376 aa).

Residue Lys202 is modified to N6-(pyridoxal phosphate)lysine.

This sequence belongs to the class-IV pyridoxal-phosphate-dependent aminotransferase family. Pyridoxal 5'-phosphate serves as cofactor.

The protein localises to the cytoplasm. It carries out the reaction L-leucine + 2-oxoglutarate = 4-methyl-2-oxopentanoate + L-glutamate. The enzyme catalyses L-isoleucine + 2-oxoglutarate = (S)-3-methyl-2-oxopentanoate + L-glutamate. It catalyses the reaction L-valine + 2-oxoglutarate = 3-methyl-2-oxobutanoate + L-glutamate. The catalysed reaction is a 2-oxocarboxylate + L-methionine = 4-methylsulfanyl-2-oxobutanoate + an L-alpha-amino acid. It participates in amino-acid biosynthesis; L-isoleucine biosynthesis; L-isoleucine from 2-oxobutanoate: step 4/4. The protein operates within amino-acid biosynthesis; L-leucine biosynthesis; L-leucine from 3-methyl-2-oxobutanoate: step 4/4. It functions in the pathway amino-acid biosynthesis; L-valine biosynthesis; L-valine from pyruvate: step 4/4. Its pathway is amino-acid biosynthesis; L-methionine biosynthesis via salvage pathway; L-methionine from S-methyl-5-thio-alpha-D-ribose 1-phosphate: step 6/6. In terms of biological role, cytoplasmic isozyme of branched-chain-amino-acid aminotransferase, which catalyzes the first reaction in the catabolism of the essential branched chain amino acids (BCAAs) leucine, isoleucine, and valine. Catalyzes the formation of methionine from 2-keto-4-methylthiobutyrate (KMTB) in the methionine salvage pathway primarily using BCAAs (leucine, isoleucine, and valine) as well as lysine and proline as the amino donors. Involved in cell cycle regulation. In Saccharomyces cerevisiae (strain ATCC 204508 / S288c) (Baker's yeast), this protein is Branched-chain-amino-acid aminotransferase, cytosolic.